Consider the following 340-residue polypeptide: Farnesyl pyrophosphate synthase 1 (340 aa).

The isopentenyl diphosphate site is built by K47, R50, and Q85. Mg(2+) is bound by residues D92 and D96. R101 contacts dimethylallyl diphosphate. R102 contributes to the isopentenyl diphosphate binding site. K188, T189, Q227, K244, and K253 together coordinate dimethylallyl diphosphate.

Belongs to the FPP/GGPP synthase family. Mg(2+) is required as a cofactor. As to expression, mainly expressed in trichomes and flowers, and, to a lower extent, in leaves, roots and stems.

Its subcellular location is the cytoplasm. It is found in the nucleus. The enzyme catalyses isopentenyl diphosphate + dimethylallyl diphosphate = (2E)-geranyl diphosphate + diphosphate. It catalyses the reaction isopentenyl diphosphate + (2E)-geranyl diphosphate = (2E,6E)-farnesyl diphosphate + diphosphate. Its pathway is isoprenoid biosynthesis; farnesyl diphosphate biosynthesis; farnesyl diphosphate from geranyl diphosphate and isopentenyl diphosphate: step 1/1. It functions in the pathway sesquiterpene biosynthesis. It participates in isoprenoid biosynthesis; geranyl diphosphate biosynthesis; geranyl diphosphate from dimethylallyl diphosphate and isopentenyl diphosphate: step 1/1. Functionally, catalyzes the sequential condensation of isopentenyl pyrophosphate with the allylic pyrophosphates, dimethylallyl pyrophosphate, and then with the resultant geranylpyrophosphate to the ultimate product farnesyl pyrophosphate. This Cannabis sativa (Hemp) protein is Farnesyl pyrophosphate synthase 1.